A 160-amino-acid polypeptide reads, in one-letter code: Transcription elongation factor GreA (160 aa).

The stretch at 4–70 (QKQYPMTQEG…IEQDIQRIEH (67 aa)) forms a coiled coil.

This sequence belongs to the GreA/GreB family.

Its function is as follows. Necessary for efficient RNA polymerase transcription elongation past template-encoded arresting sites. The arresting sites in DNA have the property of trapping a certain fraction of elongating RNA polymerases that pass through, resulting in locked ternary complexes. Cleavage of the nascent transcript by cleavage factors such as GreA or GreB allows the resumption of elongation from the new 3'terminus. GreA releases sequences of 2 to 3 nucleotides. The sequence is that of Transcription elongation factor GreA from Staphylococcus carnosus (strain TM300).